Reading from the N-terminus, the 158-residue chain is Transcriptional repressor NrdR (158 aa).

The segment at 3–34 (CPSCQNTDSRVLESRAADAGRSVRRRRECLHC) is a zinc-finger region. The 91-residue stretch at 49-139 (ITVLKRNGNR…VYRHFRGIND (91 aa)) folds into the ATP-cone domain.

It belongs to the NrdR family. Zn(2+) is required as a cofactor.

In terms of biological role, negatively regulates transcription of bacterial ribonucleotide reductase nrd genes and operons by binding to NrdR-boxes. This chain is Transcriptional repressor NrdR, found in Prochlorococcus marinus (strain MIT 9303).